A 521-amino-acid polypeptide reads, in one-letter code: Feruloyl esterase B (521 aa).

Residues 1-17 (MKVASLLSLALPGAALA) form the signal peptide. 2 cysteine pairs are disulfide-bonded: Cys-26-Cys-72 and Cys-61-Cys-111. N-linked (GlcNAc...) asparagine glycosylation is found at Asn-37, Asn-51, Asn-77, Asn-95, Asn-144, and Asn-177. 3 cysteine pairs are disulfide-bonded: Cys-184–Cys-438, Cys-253–Cys-270, and Cys-279–Cys-288. Ser-185 (acyl-ester intermediate) is an active-site residue. Asp-254, Asp-257, Ala-259, Asp-261, and Ile-263 together coordinate Ca(2+). Asn-284, Asn-347, Asn-352, and Asn-378 each carry an N-linked (GlcNAc...) asparagine glycan. Residues Asp-397 and His-437 each act as charge relay system in the active site. Residues Asn-488 and Asn-511 are each glycosylated (N-linked (GlcNAc...) asparagine). Residues Cys-498 and Cys-520 are joined by a disulfide bond.

The protein belongs to the tannase family. Homodimer. Post-translationally, glycosylated.

The protein localises to the secreted. The catalysed reaction is feruloyl-polysaccharide + H2O = ferulate + polysaccharide.. Its activity is regulated as follows. Inhibited by the specific serine esterase inhibitor AEBSF. Functionally, involved in degradation of plant cell walls. Hydrolyzes of the feruloyl-arabinose ester bond in arabinoxylans as well as the feruloyl-galactose and feruloyl-arabinose ester bonds in pectin. This Aspergillus niger protein is Feruloyl esterase B (faeB).